The chain runs to 812 residues: Phospholipase D alpha 2 (812 aa).

The propeptide occupies 1 to 36 (MAQHLLHGTLHATIYEVDALHTGGLRSAGFLGKIIS). Residues 1 to 127 (MAQHLLHGTL…INGEEVEKWV (127 aa)) enclose the C2 domain. The 41-residue stretch at 328–368 (AMFTHHQKIVVVDSEVPSQGGGSEMRRIMSFVGGIDLCDGR) folds into the PLD phosphodiesterase 1 domain. Residues His-333, Lys-335, and Asp-340 contribute to the active site. His-333 is an a 1,2-diacyl-sn-glycero-3-phosphate binding site. A Ca(2+)-binding site is contributed by His-374. A 1,2-diacyl-sn-glycero-3-phosphate-binding residues include Gln-524 and His-663. A PLD phosphodiesterase 2 domain is found at 658–685 (FMIYVHSKMMIVDDEYIIVGSANINQRS). Catalysis depends on residues His-663, Lys-665, and Asp-670. Ca(2+) is bound at residue Glu-724.

The protein belongs to the phospholipase D family. C2-PLD subfamily. Requires Ca(2+) as cofactor.

The protein resides in the cytoplasm. It localises to the membrane. The enzyme catalyses a 1,2-diacyl-sn-glycero-3-phosphocholine + H2O = a 1,2-diacyl-sn-glycero-3-phosphate + choline + H(+). In terms of biological role, hydrolyzes glycerol-phospholipids at the terminal phosphodiesteric bond. Plays an important role in various cellular processes, including phytohormone action, vesicular trafficking, secretion, cytoskeletal arrangement, meiosis, tumor promotion, pathogenesis, membrane deterioration and senescence. The protein is Phospholipase D alpha 2 (PLD2) of Brassica oleracea var. capitata (Cabbage).